Reading from the N-terminus, the 706-residue chain is Glycylpeptide N-tetradecanoyltransferase (706 aa).

A disordered region spans residues 1–119; it reads MSGIAGTSQD…LASGSSREGK (119 aa). The span at 7 to 42 shows a compositional bias: low complexity; that stretch reads TSQDTSVAASASSSSTRPAAASSSIAPPSPSLTTAP. A compositionally biased stretch (acidic residues) spans 47 to 65; the sequence is EQDDDDDQENDDEEEEEEG. Residues 78–95 are compositionally biased toward basic residues; the sequence is KQRKKKKSKAAAKLRKKL. Residues 180-183, 317-319, and 325-329 each bind tetradecanoyl-CoA; these read HKFW, LCV, and SKRLA. Catalysis depends on V706, which acts as the Proton acceptor; via carboxylate.

Belongs to the NMT family. In terms of assembly, monomer.

The protein resides in the cytoplasm. The enzyme catalyses N-terminal glycyl-[protein] + tetradecanoyl-CoA = N-tetradecanoylglycyl-[protein] + CoA + H(+). Its function is as follows. Adds a myristoyl group to the N-terminal glycine residue of certain cellular proteins. The chain is Glycylpeptide N-tetradecanoyltransferase (NMT1) from Mycosarcoma maydis (Corn smut fungus).